The sequence spans 191 residues: Fe/S biogenesis protein NfuA (191 aa).

[4Fe-4S] cluster-binding residues include cysteine 149 and cysteine 152.

The protein belongs to the NfuA family. In terms of assembly, homodimer. The cofactor is [4Fe-4S] cluster.

In terms of biological role, involved in iron-sulfur cluster biogenesis. Binds a 4Fe-4S cluster, can transfer this cluster to apoproteins, and thereby intervenes in the maturation of Fe/S proteins. Could also act as a scaffold/chaperone for damaged Fe/S proteins. The protein is Fe/S biogenesis protein NfuA of Yersinia enterocolitica serotype O:8 / biotype 1B (strain NCTC 13174 / 8081).